Reading from the N-terminus, the 254-residue chain is Ferritin, chloroplastic (254 aa).

The transit peptide at 1–48 (MALAPSKVSPFSGFSLSDGVGAVRNPTCSVSLSFLNKKVGSRNLGVSA) directs the protein to the chloroplast. The extension peptide (EP) stretch occupies residues 49–81 (STVPLTGVIFEPFEEVKKEELAVPTAGQVSLAR). The Ferritin-like diiron domain maps to 82 to 235 (QYYADECESA…EYVAQLRMVG (154 aa)). Residues Glu99, Glu134, His137, Glu183, and Gln217 each contribute to the Fe cation site.

This sequence belongs to the ferritin family. Oligomer of 24 subunits. There are two types of subunits: L (light) chain and H (heavy) chain. The major chain can be light or heavy, depending on the species and tissue type. The functional molecule forms a roughly spherical shell with a diameter of 12 nm and contains a central cavity into which the insoluble mineral iron core is deposited.

It is found in the plastid. The protein localises to the chloroplast. The catalysed reaction is 4 Fe(2+) + O2 + 4 H(+) = 4 Fe(3+) + 2 H2O. Functionally, stores iron in a soluble, non-toxic, readily available form. Important for iron homeostasis. Has ferroxidase activity. Iron is taken up in the ferrous form and deposited as ferric hydroxides after oxidation. This chain is Ferritin, chloroplastic (PFE), found in Phaseolus vulgaris (Kidney bean).